The primary structure comprises 188 residues: Cytochrome b-245 chaperone 1 homolog (188 aa).

A helical transmembrane segment spans residues 20–42 (SIRSWSLLVGISSVGLAAAYYST).

Belongs to the CYBC1 family.

The protein resides in the endoplasmic reticulum membrane. Its function is as follows. Functions as a chaperone necessary for a stable expression of the CYBA and CYBB subunits of the cytochrome b-245 heterodimer. The polypeptide is Cytochrome b-245 chaperone 1 homolog (cybc1) (Xenopus tropicalis (Western clawed frog)).